The chain runs to 405 residues: Exodeoxyribonuclease 7 large subunit (405 aa).

This sequence belongs to the XseA family. In terms of assembly, heterooligomer composed of large and small subunits.

The protein resides in the cytoplasm. The catalysed reaction is Exonucleolytic cleavage in either 5'- to 3'- or 3'- to 5'-direction to yield nucleoside 5'-phosphates.. Its function is as follows. Bidirectionally degrades single-stranded DNA into large acid-insoluble oligonucleotides, which are then degraded further into small acid-soluble oligonucleotides. This is Exodeoxyribonuclease 7 large subunit from Syntrophomonas wolfei subsp. wolfei (strain DSM 2245B / Goettingen).